Reading from the N-terminus, the 132-residue chain is Tail assembly protein Gp24 (132 aa).

The protein belongs to the L5likevirus tail assembly protein family. As to quaternary structure, interacts with tail assembly protein Gp25 and tape measure protein.

In terms of biological role, promotes tail assembly by creating a scaffold for the tail tube proteins. The tail assembly proteins Gp24 and Gp25 would wrap the linear tape measure protein to create a tail assembly scaffold. It would allow polymerization of tail tube protein during which Gp24 and Gp25 are released and therefore are absent from the mature virion. The tail assembly protein Gp25 is produced by a rare -1 ribosomal frameshift. The ratio Gp24/Gp25 is important for proper tail assembly. In Mycobacterium (Mycobacteriophage L5), this protein is Tail assembly protein Gp24 (24).